The sequence spans 389 residues: GTPase Obg (389 aa).

The region spanning 1-159 (MKFVDEAVIK…RELRLELLLL (159 aa)) is the Obg domain. One can recognise an OBG-type G domain in the interval 160 to 333 (ADVGLLGMPN…LAEKLFDFIK (174 aa)). GTP-binding positions include 166–173 (GMPNAGKS), 191–195 (FTTLV), 213–216 (DIPG), 283–286 (NKTD), and 314–316 (SAA). Mg(2+)-binding residues include Ser173 and Thr193.

Belongs to the TRAFAC class OBG-HflX-like GTPase superfamily. OBG GTPase family. As to quaternary structure, monomer. It depends on Mg(2+) as a cofactor.

It localises to the cytoplasm. Its function is as follows. An essential GTPase which binds GTP, GDP and possibly (p)ppGpp with moderate affinity, with high nucleotide exchange rates and a fairly low GTP hydrolysis rate. Plays a role in control of the cell cycle, stress response, ribosome biogenesis and in those bacteria that undergo differentiation, in morphogenesis control. This Shewanella amazonensis (strain ATCC BAA-1098 / SB2B) protein is GTPase Obg.